The primary structure comprises 732 residues: uncharacterized protein (732 aa).

This sequence belongs to the mimivirus L137 family.

This is an uncharacterized protein from Acanthamoeba polyphaga mimivirus (APMV).